The chain runs to 193 residues: ATP-dependent Clp protease proteolytic subunit (193 aa).

Catalysis depends on Ser-97, which acts as the Nucleophile. Residue His-122 is part of the active site.

The protein belongs to the peptidase S14 family. Fourteen ClpP subunits assemble into 2 heptameric rings which stack back to back to give a disk-like structure with a central cavity, resembling the structure of eukaryotic proteasomes.

The protein localises to the cytoplasm. The catalysed reaction is Hydrolysis of proteins to small peptides in the presence of ATP and magnesium. alpha-casein is the usual test substrate. In the absence of ATP, only oligopeptides shorter than five residues are hydrolyzed (such as succinyl-Leu-Tyr-|-NHMec, and Leu-Tyr-Leu-|-Tyr-Trp, in which cleavage of the -Tyr-|-Leu- and -Tyr-|-Trp bonds also occurs).. Functionally, cleaves peptides in various proteins in a process that requires ATP hydrolysis. Has a chymotrypsin-like activity. Plays a major role in the degradation of misfolded proteins. In Fusobacterium nucleatum subsp. nucleatum (strain ATCC 25586 / DSM 15643 / BCRC 10681 / CIP 101130 / JCM 8532 / KCTC 2640 / LMG 13131 / VPI 4355), this protein is ATP-dependent Clp protease proteolytic subunit.